Reading from the N-terminus, the 614-residue chain is Heat shock protein SSB1 (614 aa).

Positions 1–392 (MSTEVYDGAI…ILSGKATSAE (392 aa)) are nucleotide binding domain (NBD). Residues 16–18 (TTY), lysine 74, 206–208 (GGT), 272–279 (ERAKRTLS), and glycine 343 each bind ATP. The segment at 393–403 (TADLLLLDVVP) is inter-domain linker. Residues 404–614 (LSLGVAMEGN…RAVTKAMSSR (211 aa)) form a substrate binding domain (SBD) region. The lid domain (SBDalpha) stretch occupies residues 517–613 (TSEIENMISE…KRAVTKAMSS (97 aa)). A Nuclear export signal motif is present at residues 575 to 583 (IENTMSEAM).

Belongs to the heat shock protein 70 family. Interacts with HAT1 in starvation conditions.

It localises to the nucleus. The protein resides in the cytoplasm. The enzyme catalyses ATP + H2O = ADP + phosphate + H(+). Functionally, chaperone that interacts with the histone acetyltransferase HAT1 and mediates its translocation from the nucleus to the cytoplasm during germination and starvation conditions. Within the cytoplasm, HAT1 regulates autophagy via acetylation of the autophagy-related proteins ATG3 and ATG9. The polypeptide is Heat shock protein SSB1 (Pyricularia oryzae (strain 70-15 / ATCC MYA-4617 / FGSC 8958) (Rice blast fungus)).